Here is a 263-residue protein sequence, read N- to C-terminus: Phosphonates import ATP-binding protein PhnC 1 (263 aa).

The ABC transporter domain maps to Ile3 to Lys248. Gly37–Ser44 is a binding site for ATP.

The protein belongs to the ABC transporter superfamily. Phosphonates importer (TC 3.A.1.9.1) family. The complex is composed of two ATP-binding proteins (PhnC), two transmembrane proteins (PhnE) and a solute-binding protein (PhnD).

Its subcellular location is the cell inner membrane. It carries out the reaction phosphonate(out) + ATP + H2O = phosphonate(in) + ADP + phosphate + H(+). Part of the ABC transporter complex PhnCDE involved in phosphonates import. Responsible for energy coupling to the transport system. This chain is Phosphonates import ATP-binding protein PhnC 1, found in Synechococcus sp. (strain JA-2-3B'a(2-13)) (Cyanobacteria bacterium Yellowstone B-Prime).